A 432-amino-acid polypeptide reads, in one-letter code: Glutamyl-tRNA reductase (432 aa).

Residues 55–58 (TCNR), Ser-114, 119–121 (ETQ), and Gln-125 contribute to the substrate site. The Nucleophile role is filled by Cys-56. An NADP(+)-binding site is contributed by 194–199 (GAGEMI).

The protein belongs to the glutamyl-tRNA reductase family. In terms of assembly, homodimer.

It catalyses the reaction (S)-4-amino-5-oxopentanoate + tRNA(Glu) + NADP(+) = L-glutamyl-tRNA(Glu) + NADPH + H(+). It functions in the pathway porphyrin-containing compound metabolism; protoporphyrin-IX biosynthesis; 5-aminolevulinate from L-glutamyl-tRNA(Glu): step 1/2. Catalyzes the NADPH-dependent reduction of glutamyl-tRNA(Glu) to glutamate 1-semialdehyde (GSA). In Burkholderia ambifaria (strain MC40-6), this protein is Glutamyl-tRNA reductase.